The sequence spans 781 residues: Dual specificity protein kinase zakA (781 aa).

Protein kinase domains are found at residues 9 to 317 (WEEI…HKLI) and 379 to 654 (DKDD…EIGL). Residues 15-23 (IGEGQYGRV) and K44 contribute to the ATP site. D132 (proton acceptor) is an active-site residue. The interval 168–209 (ETTNNNNNPNNNNNNNNNNNNNNNNNNNNNNNNNNINNINNN) is disordered. A compositionally biased stretch (low complexity) spans 171-209 (NNNNNPNNNNNNNNNNNNNNNNNNNNNNNNNNINNINNN). Residues 385–393 (GGAGNFGDV) and K406 contribute to the ATP site. The Proton acceptor role is filled by D507.

In the N-terminal section; belongs to the protein kinase superfamily. Ser/Thr protein kinase family. It in the C-terminal section; belongs to the protein kinase superfamily. TKL Tyr protein kinase family. Post-translationally, N-terminal serine/threonine domain is capable of autophosphorylation, in vitro, but to a lower extent than the tyrosine kinase domain. May function as a negative regulator of the tyrosine kinase domain. In terms of processing, C-terminal tyrosine kinase domain is capable of autophosphorylation, in vitro. As to expression, zakA and zak2 are coexpressed in prestalk cell population, zakA is enriched in pstB populations and zak1 in pstA populations. ZakA and zak2 are coexpressed in prespore cells, zakA expression levels are 10 fold higher than zak2.

The catalysed reaction is L-seryl-[protein] + ATP = O-phospho-L-seryl-[protein] + ADP + H(+). It catalyses the reaction L-threonyl-[protein] + ATP = O-phospho-L-threonyl-[protein] + ADP + H(+). It carries out the reaction L-tyrosyl-[protein] + ATP = O-phospho-L-tyrosyl-[protein] + ADP + H(+). Functionally, positive regulator of gsk3/gskA activity required for cell pattern formation and a downstream effector of carC. The kinases, gsk3/gskA, zakA and zak2, form part of a signaling pathway that responds to extracellular cyclic AMP. The pathway has a role in transcriptional regulation; required to direct prespore/spore fates during development. ZakA negatively regulates prestalk differentiation by regulating expression of ecmB. Phosphorylates Y-214 of gsk3/gskA, in vitro. The chain is Dual specificity protein kinase zakA (zakA) from Dictyostelium discoideum (Social amoeba).